The primary structure comprises 336 residues: Formimidoylglutamase (336 aa).

Mn(2+) is bound by residues H129, D160, H162, D164, D257, and D259.

This sequence belongs to the arginase family. Requires Mn(2+) as cofactor.

It carries out the reaction N-formimidoyl-L-glutamate + H2O = formamide + L-glutamate. It participates in amino-acid degradation; L-histidine degradation into L-glutamate; L-glutamate from N-formimidoyl-L-glutamate (hydrolase route): step 1/1. Catalyzes the conversion of N-formimidoyl-L-glutamate to L-glutamate and formamide. This is Formimidoylglutamase from Vibrio vulnificus (strain CMCP6).